The primary structure comprises 825 residues: MQTPATIKSYQDIKANIEKACQRIAPLWPLKHFVAVNPYVGLRDQPFWRADQTLRKITGKGLTMPRPYYEEQIANGRITQEDLDEALKEMHSNWSVTQLKQAMKQRSASRNVPFPVFADAMFADDRRDWPGFVVERISQYCAAYFDEGQATWSMPWRDDPMYQAWLKFMHFDKSPRMVGLRGIGEAAAALPAAAETAIALALKELSVPFDLIDDYLFAALLSIGGWAGWARYLRWQAELKGETDQSLRDLLAIRVCWDAILHKTCADIAVRKQWHLMLHTQQNRAIEKPSEHVDAILQTALEIGYQRSLIKSLKEASRPSNTVIERPVAQAAFCIDVRSEIIRRALETVAPGIQTLGFAGFFGVLMEYVPFGSNAPKGHLPVIFNPPYRVCEDLSHASEDETQRHAAKRQLRLRVATAWKSFKTSAVSTFTFVEATGLLYAPKLFGDSMGWTRTVPHPDERGLDSGTKQRLRPRLIASGNGKSSAKSTGIPETERAGVGEFILKNMGLTQTFARLILLAGHGSTTVNNPQGTGLDCGACAGQTGEASARIAVTLLNDPATRRGLEEKGLKIPKDTYFIAGLHDTTTDEVTIFDTEDLPTTHAKDLAQLRQWLADAGELTRLERATLLGTASQAPEVVTRDMRRRTRDWAEVRPEWALAGNAAFIAAPRQRTRGVDLEGRAFLHDYDWHKDAGFSTLELIMTAPMVVANWINMQYYGSMVDNLRFGSGNKVLHNVVGGSIGVLEGNGGDLRVGFALQSLHDGKRWIHEPVRLNVVIEAPQAEMESIISRHILVRELVDNGWLYLFQIDDDGSVYRRVCDKQWPRMT.

4 residues coordinate Zn(2+): C334, D336, H521, and C536.

This sequence belongs to the inorganic carbon transporter (TC 9.A.2) DabA family. In terms of assembly, forms a complex with DabB. Zn(2+) serves as cofactor.

Its subcellular location is the cell inner membrane. Part of an energy-coupled inorganic carbon pump. This Acidithiobacillus ferrooxidans (strain ATCC 53993 / BNL-5-31) (Leptospirillum ferrooxidans (ATCC 53993)) protein is Probable inorganic carbon transporter subunit DabA.